A 129-amino-acid polypeptide reads, in one-letter code: Glycine cleavage system H protein (129 aa).

In terms of domain architecture, Lipoyl-binding spans 24–106 (TYTVGITEHA…YTDGWIFKIR (83 aa)). Lys65 is modified (N6-lipoyllysine).

It belongs to the GcvH family. In terms of assembly, the glycine cleavage system is composed of four proteins: P, T, L and H. (R)-lipoate is required as a cofactor.

The glycine cleavage system catalyzes the degradation of glycine. The H protein shuttles the methylamine group of glycine from the P protein to the T protein. The protein is Glycine cleavage system H protein of Enterobacter sp. (strain 638).